The chain runs to 164 residues: Ribosome maturation factor RimP (164 aa).

This sequence belongs to the RimP family.

The protein resides in the cytoplasm. Required for maturation of 30S ribosomal subunits. The sequence is that of Ribosome maturation factor RimP from Mycoplasma mycoides subsp. mycoides SC (strain CCUG 32753 / NCTC 10114 / PG1).